A 233-amino-acid chain; its full sequence is Lipoprotein-releasing system ATP-binding protein LolD (233 aa).

The ABC transporter domain occupies 6–233 (LQCDNLCKRY…TAELSLMGAE (228 aa)). 42–49 (GSSGSGKS) serves as a coordination point for ATP.

It belongs to the ABC transporter superfamily. Lipoprotein translocase (TC 3.A.1.125) family. The complex is composed of two ATP-binding proteins (LolD) and two transmembrane proteins (LolC and LolE).

The protein resides in the cell inner membrane. Part of the ABC transporter complex LolCDE involved in the translocation of mature outer membrane-directed lipoproteins, from the inner membrane to the periplasmic chaperone, LolA. Responsible for the formation of the LolA-lipoprotein complex in an ATP-dependent manner. The polypeptide is Lipoprotein-releasing system ATP-binding protein LolD (Shigella dysenteriae serotype 1 (strain Sd197)).